Here is a 444-residue protein sequence, read N- to C-terminus: Tubulin beta chain (444 aa).

Residues Q11, E68, S137, G141, T142, G143, N203, and N225 each contribute to the GTP site. A Mg(2+)-binding site is contributed by E68. A disordered region spans residues 424–444; the sequence is QDATAEEEGEFDEDEEMDEMM. A compositionally biased stretch (acidic residues) spans 427 to 444; that stretch reads TAEEEGEFDEDEEMDEMM.

It belongs to the tubulin family. In terms of assembly, dimer of alpha and beta chains. A typical microtubule is a hollow water-filled tube with an outer diameter of 25 nm and an inner diameter of 15 nM. Alpha-beta heterodimers associate head-to-tail to form protofilaments running lengthwise along the microtubule wall with the beta-tubulin subunit facing the microtubule plus end conferring a structural polarity. Microtubules usually have 13 protofilaments but different protofilament numbers can be found in some organisms and specialized cells. The cofactor is Mg(2+).

It is found in the cytoplasm. Its subcellular location is the cytoskeleton. Functionally, tubulin is the major constituent of microtubules, a cylinder consisting of laterally associated linear protofilaments composed of alpha- and beta-tubulin heterodimers. Microtubules grow by the addition of GTP-tubulin dimers to the microtubule end, where a stabilizing cap forms. Below the cap, tubulin dimers are in GDP-bound state, owing to GTPase activity of alpha-tubulin. This chain is Tubulin beta chain, found in Achlya klebsiana.